A 277-amino-acid chain; its full sequence is MNKILEVENLVFKYEKESDVNQLNGVSFSITKGEWVSIIGQNGSGKSTTARLIDGLFEEFEGKVKIDGELLTAENVWNLRRKIGMVFQNPDNQFVGATVEDDVAFGMENQGIPREEMIKRVDEALLAVNMLDFKTREPARLSGGQKQRVAVAGIIALRPEIIILDESTSMLDPTGRQEIMRVIHEIKEKYQLTVLSITHDLDEAASSDRILVMKAGEIIKEAAPSELFATSEDMVEIGLDVPFSSNLMKDLRKNGFDLPEKYLSEDELVELLADKLR.

The region spanning 5-240 (LEVENLVFKY…SEDMVEIGLD (236 aa)) is the ABC transporter domain. An ATP-binding site is contributed by 40–47 (GQNGSGKS).

This sequence belongs to the ABC transporter superfamily. Energy-coupling factor EcfA family. In terms of assembly, forms a stable energy-coupling factor (ECF) transporter complex composed of 2 membrane-embedded substrate-binding proteins (S component), 2 ATP-binding proteins (A component) and 2 transmembrane proteins (T component).

The protein localises to the cell membrane. Its function is as follows. ATP-binding (A) component of a common energy-coupling factor (ECF) ABC-transporter complex. Unlike classic ABC transporters this ECF transporter provides the energy necessary to transport a number of different substrates. This chain is Energy-coupling factor transporter ATP-binding protein EcfA1, found in Lactococcus lactis subsp. lactis (strain IL1403) (Streptococcus lactis).